Here is a 2147-residue protein sequence, read N- to C-terminus: Non-reducing polyketide synthase albA (2147 aa).

The interval 8–244 (YLFGDQTSDI…VKAPIHGPYH (237 aa)) is N-terminal acylcarrier protein transacylase domain (SAT). The Ketosynthase family 3 (KS3) domain maps to 375 to 806 (CSKIAIIGMS…GGNTAILLED (432 aa)). Residues cysteine 547, histidine 682, and histidine 724 each act as for beta-ketoacyl synthase activity in the active site. A malonyl-CoA:ACP transacylase (MAT) domain region spans residues 912–1232 (FVFTGQGAQY…LSSLHLAGID (321 aa)). The For acyl/malonyl transferase activity role is filled by serine 1001. The interval 1286-1425 (HEFLTTAAQK…CTVRFFDCAA (140 aa)) is N-terminal hotdog fold. Residues 1286–1598 (HEFLTTAAQK…FQGLSRKILD (313 aa)) form the PKS/mFAS DH domain. The tract at residues 1290 to 1603 (TTAAQKVIET…RKILDTVLPP (314 aa)) is product template (PT) domain. Histidine 1326 serves as the catalytic Proton acceptor; for dehydratase activity. Positions 1452 to 1598 (DAHRLGRGMV…FQGLSRKILD (147 aa)) are C-terminal hotdog fold. Catalysis depends on aspartate 1511, which acts as the Proton donor; for dehydratase activity. A disordered region spans residues 1608–1637 (KGPARPAASAQKAAPAATSKSRASAPAPAK). Residues 1610-1637 (PARPAASAQKAAPAATSKSRASAPAPAK) show a composition bias toward low complexity. The region spanning 1642-1719 (PSAPSLVKRA…DFKQFLAPMS (78 aa)) is the Carrier 1 domain. Serine 1679 is subject to O-(pantetheine 4'-phosphoryl)serine. Positions 1719-1759 (SQGEASDGSTSDPESSSSFNGGSSTDESSAGSPVSSPPNEK) are disordered. The segment covering 1724–1747 (SDGSTSDPESSSSFNGGSSTDESS) has biased composition (low complexity). Residues 1760-1837 (IEQHATMKEI…DVEDALGLKP (78 aa)) enclose the Carrier 2 domain. Serine 1797 is subject to O-(pantetheine 4'-phosphoryl)serine. Positions 1873–2145 (SPHPRSTSIL…ELGSFIGNAM (273 aa)) are claisen cyclase domain. Residue serine 1963 is the For Claisen cyclase activity of the active site.

It carries out the reaction 6 malonyl-CoA + acetyl-CoA + 6 H(+) = naphtopyrone YWA1 + 6 CO2 + 7 CoA + H2O. It functions in the pathway secondary metabolite biosynthesis. In terms of biological role, non-reducing polyketide synthase involved in the biosynthesis of bifonsecin B, a dimeric gamma-naphthopyrone. The first step in the biosynthesis of bifonsecin B is the production of gamma-naphthopyrone precursor YWA1 by the non-reducing polyketide synthase albA, via condensation of one acetyl-CoA starter unit with 6 malonyl-CoA units. YWA1 is then methylated by bfoE at position C-6 to yield foncesin which is further methylated at position C-8 by bfoD to produce fonsecin B. A key enzyme in the biosynthetic pathway is the cytochrome P450 monooxygenase bfoB which catalyzes the oxidative dimerization of fonsecin B to bifonsecin B. Bfob also catalyzes the oxidative dimerization of rubrofusarin B into nigerone. The stereoselectivity of bfoB is influenced by the two natural monomeric substrates; homodimerization of fonsecin B yields a stereochemically pure biaryl, M-foncerine B, while rubrofusarin B yields a mixture of enantiomers M- and P-nigerone. This Aspergillus brasiliensis (strain CBS 101740 / IMI 381727 / IBT 21946) protein is Non-reducing polyketide synthase albA.